A 543-amino-acid polypeptide reads, in one-letter code: Probable zinc transporter protein DDB_G0283629 (543 aa).

The tract at residues 1-175 (MENFKNNELE…EESKPLNQLR (175 aa)) is disordered. The Cytoplasmic segment spans residues 1–186 (MENFKNNELE…LDSKKKARYS (186 aa)). Low complexity-rich tracts occupy residues 11–26 (SSPI…SINN) and 41–55 (NNNN…NSHI). Basic and acidic residues-rich tracts occupy residues 56–66 (NNHDHKHNHEH) and 76–104 (HNHD…EHNV). A compositionally biased stretch (low complexity) spans 105–116 (GNKNLLTNNNNQ). Over residues 130–140 (EDGSSSGGGGG) the composition is skewed to gly residues. A helical transmembrane segment spans residues 187-207 (LILALTLTTIFMVGEIVGGYF). The Extracellular segment spans residues 208–216 (ANSLAIMTD). Residues 217-237 (AAHLLTDIGAMFLSLFAMWIS) traverse the membrane as a helical segment. Over 238–251 (QHPPTSSMSFGFHR) the chain is Cytoplasmic. A helical transmembrane segment spans residues 252-272 (AEILGALVSVLMIWALTGVLV). At 273–289 (YEAIQRILYPPDAVDGK) the chain is on the extracellular side. The helical transmembrane segment at 290-310 (IMFIIASCGLFINIIDAIILH) threads the bilayer. Residues 311–375 (WGSGGHGHSH…VRNINVHSAY (65 aa)) are Cytoplasmic-facing. The interval 319–342 (SHGGGHGHSHGIGGGTQKKKSKKN) is disordered. The chain crosses the membrane as a helical span at residues 376 to 396 (IHVLGDCFQSIGVMVASCIIW). Over 397-402 (VHPHWK) the chain is Extracellular. A helical membrane pass occupies residues 403–423 (IADPITTLIFSVIVLGTTIKL). Residues 424 to 543 (LRESLGVLME…NDNLSSPPNQ (120 aa)) are Cytoplasmic-facing. Positions 516–543 (KCKDHSCPPPKPKKKKIKNDNLSSPPNQ) are disordered.

Belongs to the cation diffusion facilitator (CDF) transporter (TC 2.A.4) family. SLC30A subfamily.

It localises to the membrane. Its function is as follows. May be involved in zinc transport from the cytoplasm to either intracellular organelles or extracellular spaces. The sequence is that of Probable zinc transporter protein DDB_G0283629 from Dictyostelium discoideum (Social amoeba).